The following is a 45-amino-acid chain: Large ribosomal subunit protein bL34 (45 aa).

A disordered region spans residues 1-45 (MTKRTFGGTSRKRKRVSGFRVRMRTHTGRSVIRSRRKKGRSRIAV). Residues 10–45 (SRKRKRVSGFRVRMRTHTGRSVIRSRRKKGRSRIAV) show a composition bias toward basic residues.

The protein belongs to the bacterial ribosomal protein bL34 family.

In Prochlorococcus marinus (strain SARG / CCMP1375 / SS120), this protein is Large ribosomal subunit protein bL34.